We begin with the raw amino-acid sequence, 404 residues long: Probable mannosyltransferase KTR3 (404 aa).

Over 1–27 (MSVHHKKKLMPKSALLIRKYQKGIRSS) the chain is Cytoplasmic. The chain crosses the membrane as a helical; Signal-anchor for type II membrane protein span at residues 28–44 (FIGLIIVLSFLFFMSGS). Residues 45–83 (RSPEVPIAQGTSVSRVASKDYLMPFTDKSQGVIHPVDDG) form a stem region region. Residues 45–404 (RSPEVPIAQG…AGNYKLPPGI (360 aa)) are Lumenal-facing. The segment at 84–404 (KKEKGVMVTL…AGNYKLPPGI (321 aa)) is catalytic. The active-site Nucleophile is glutamate 295.

The protein belongs to the glycosyltransferase 15 family. As to quaternary structure, interacts with SVP26.

It localises to the membrane. Its function is as follows. Possible glycosyltransferase that transfers an alpha-D-mannosyl residue from GDP-mannose into lipid-linked oligosaccharide, forming an alpha-(1-&gt;2)-D-mannosyl-D-mannose linkage. This Saccharomyces cerevisiae (strain ATCC 204508 / S288c) (Baker's yeast) protein is Probable mannosyltransferase KTR3 (KTR3).